Consider the following 82-residue polypeptide: MSGKNEFNIFKHVLVPEHRILSEEEKKALLEKYKITPAQLPQIRASDPAVKALGAKPGDIIEIKRRSPTAGVYYYYRVVVED.

The protein belongs to the archaeal Rpo5/eukaryotic RPB5 RNA polymerase subunit family. Part of the RNA polymerase complex.

It localises to the cytoplasm. It catalyses the reaction RNA(n) + a ribonucleoside 5'-triphosphate = RNA(n+1) + diphosphate. Its function is as follows. DNA-dependent RNA polymerase (RNAP) catalyzes the transcription of DNA into RNA using the four ribonucleoside triphosphates as substrates. The chain is DNA-directed RNA polymerase subunit Rpo5 from Pyrococcus horikoshii (strain ATCC 700860 / DSM 12428 / JCM 9974 / NBRC 100139 / OT-3).